The sequence spans 75 residues: MKKSERSSRKRLSATVTSDLIDYKNIDLLRRFISERGKILSRRMTKLTSKQQRSVTVSIKRARILALLPFINRDS.

This sequence belongs to the bacterial ribosomal protein bS18 family. As to quaternary structure, part of the 30S ribosomal subunit.

It is found in the plastid. The protein resides in the chloroplast. This chain is Small ribosomal subunit protein bS18c, found in Psilotum nudum (Whisk fern).